A 494-amino-acid polypeptide reads, in one-letter code: UPF0371 protein SpyM3_1021 (494 aa).

Belongs to the UPF0371 family.

The chain is UPF0371 protein SpyM3_1021 from Streptococcus pyogenes serotype M3 (strain ATCC BAA-595 / MGAS315).